A 958-amino-acid chain; its full sequence is Glycine dehydrogenase (decarboxylating) 2 (958 aa).

Residue Lys707 is modified to N6-(pyridoxal phosphate)lysine.

It belongs to the GcvP family. In terms of assembly, the glycine cleavage system is composed of four proteins: P, T, L and H. It depends on pyridoxal 5'-phosphate as a cofactor.

The enzyme catalyses N(6)-[(R)-lipoyl]-L-lysyl-[glycine-cleavage complex H protein] + glycine + H(+) = N(6)-[(R)-S(8)-aminomethyldihydrolipoyl]-L-lysyl-[glycine-cleavage complex H protein] + CO2. In terms of biological role, the glycine cleavage system catalyzes the degradation of glycine. The P protein binds the alpha-amino group of glycine through its pyridoxal phosphate cofactor; CO(2) is released and the remaining methylamine moiety is then transferred to the lipoamide cofactor of the H protein. This Pseudomonas aeruginosa (strain ATCC 15692 / DSM 22644 / CIP 104116 / JCM 14847 / LMG 12228 / 1C / PRS 101 / PAO1) protein is Glycine dehydrogenase (decarboxylating) 2 (gcvP2).